The chain runs to 1326 residues: Coiled-coil domain-containing protein 171 (1326 aa).

8 coiled-coil regions span residues Thr-53–His-294, Ala-323–Tyr-391, Ser-450–Lys-561, Ser-597–Asn-630, Trp-660–Val-707, Phe-765–Lys-792, Phe-979–Val-1143, and Ile-1217–Ala-1241. The segment at Ser-1306–Leu-1326 is disordered.

The chain is Coiled-coil domain-containing protein 171 (CCDC171) from Homo sapiens (Human).